The following is a 447-amino-acid chain: Argininosuccinate synthase (447 aa).

ATP contacts are provided by residues 17-25 (AFSGGLDTS) and A43. Residue Y99 coordinates L-citrulline. Residues G129 and T131 each coordinate ATP. The L-aspartate site is built by T131, N135, and D136. N135 serves as a coordination point for L-citrulline. D136 serves as a coordination point for ATP. L-citrulline is bound by residues R139 and S192. D194 provides a ligand contact to ATP. The L-citrulline site is built by T201, E203, and E280.

It belongs to the argininosuccinate synthase family. Type 2 subfamily. In terms of assembly, homotetramer.

The protein localises to the cytoplasm. It carries out the reaction L-citrulline + L-aspartate + ATP = 2-(N(omega)-L-arginino)succinate + AMP + diphosphate + H(+). The protein operates within amino-acid biosynthesis; L-arginine biosynthesis; L-arginine from L-ornithine and carbamoyl phosphate: step 2/3. The polypeptide is Argininosuccinate synthase (Escherichia coli O139:H28 (strain E24377A / ETEC)).